We begin with the raw amino-acid sequence, 342 residues long: S-adenosylmethionine:tRNA ribosyltransferase-isomerase (342 aa).

The protein belongs to the QueA family. In terms of assembly, monomer.

The protein localises to the cytoplasm. It carries out the reaction 7-aminomethyl-7-carbaguanosine(34) in tRNA + S-adenosyl-L-methionine = epoxyqueuosine(34) in tRNA + adenine + L-methionine + 2 H(+). The protein operates within tRNA modification; tRNA-queuosine biosynthesis. Functionally, transfers and isomerizes the ribose moiety from AdoMet to the 7-aminomethyl group of 7-deazaguanine (preQ1-tRNA) to give epoxyqueuosine (oQ-tRNA). The chain is S-adenosylmethionine:tRNA ribosyltransferase-isomerase from Geobacillus sp. (strain WCH70).